Here is a 133-residue protein sequence, read N- to C-terminus: ATP synthase epsilon chain, chloroplastic (133 aa).

It belongs to the ATPase epsilon chain family. In terms of assembly, F-type ATPases have 2 components, CF(1) - the catalytic core - and CF(0) - the membrane proton channel. CF(1) has five subunits: alpha(3), beta(3), gamma(1), delta(1), epsilon(1). CF(0) has three main subunits: a, b and c.

The protein resides in the plastid. Its subcellular location is the chloroplast thylakoid membrane. In terms of biological role, produces ATP from ADP in the presence of a proton gradient across the membrane. This Nephroselmis olivacea (Green alga) protein is ATP synthase epsilon chain, chloroplastic.